The following is a 387-amino-acid chain: [LysW]-aminoadipate semialdehyde/glutamate semialdehyde transaminase (387 aa).

Residues 96-97 (GT) and phenylalanine 123 each bind pyridoxal 5'-phosphate. Position 126 (arginine 126) interacts with substrate. Residue 207 to 210 (DEIQ) participates in pyridoxal 5'-phosphate binding. Lysine 236 bears the N6-(pyridoxal phosphate)lysine mark. Position 264 (serine 264) interacts with substrate. Threonine 265 provides a ligand contact to pyridoxal 5'-phosphate.

The protein belongs to the class-III pyridoxal-phosphate-dependent aminotransferase family. LysJ subfamily. In terms of assembly, homodimer. Pyridoxal 5'-phosphate is required as a cofactor.

The protein resides in the cytoplasm. It carries out the reaction [amino-group carrier protein]-C-terminal-gamma-(L-lysyl)-L-glutamate + 2-oxoglutarate = [amino-group carrier protein]-C-terminal-N-(1-carboxy-5-oxopentan-1-yl)-L-glutamine + L-glutamate. The enzyme catalyses [amino-group carrier protein]-C-terminal-gamma-(L-ornithyl)-L-glutamate + 2-oxoglutarate = [amino-group carrier protein]-C-terminal-gamma-(L-glutamyl-5-semialdehyde)-L-glutamate + L-glutamate. Its pathway is amino-acid biosynthesis; L-lysine biosynthesis via AAA pathway; L-lysine from L-alpha-aminoadipate (Thermus route): step 4/5. The protein operates within amino-acid biosynthesis; L-arginine biosynthesis. Involved in both the arginine and lysine biosynthetic pathways. This chain is [LysW]-aminoadipate semialdehyde/glutamate semialdehyde transaminase, found in Sulfolobus acidocaldarius (strain ATCC 33909 / DSM 639 / JCM 8929 / NBRC 15157 / NCIMB 11770).